A 307-amino-acid chain; its full sequence is tRNA dimethylallyltransferase (307 aa).

10–17 provides a ligand contact to ATP; it reads GPTASGKS. 12–17 provides a ligand contact to substrate; the sequence is TASGKS. Interaction with substrate tRNA stretches follow at residues 35 to 38 and 159 to 163; these read DSMQ and QRLCR.

It belongs to the IPP transferase family. Monomer. The cofactor is Mg(2+).

It carries out the reaction adenosine(37) in tRNA + dimethylallyl diphosphate = N(6)-dimethylallyladenosine(37) in tRNA + diphosphate. Catalyzes the transfer of a dimethylallyl group onto the adenine at position 37 in tRNAs that read codons beginning with uridine, leading to the formation of N6-(dimethylallyl)adenosine (i(6)A). The polypeptide is tRNA dimethylallyltransferase (Phenylobacterium zucineum (strain HLK1)).